The following is a 277-amino-acid chain: Formamidopyrimidine-DNA glycosylase (277 aa).

Catalysis depends on Pro2, which acts as the Schiff-base intermediate with DNA. Glu3 serves as the catalytic Proton donor. The Proton donor; for beta-elimination activity role is filled by Lys60. The DNA site is built by His94, Arg113, and Arg158. An FPG-type zinc finger spans residues Trp243 to Val277. The active-site Proton donor; for delta-elimination activity is the Arg267.

This sequence belongs to the FPG family. In terms of assembly, monomer. It depends on Zn(2+) as a cofactor.

The enzyme catalyses Hydrolysis of DNA containing ring-opened 7-methylguanine residues, releasing 2,6-diamino-4-hydroxy-5-(N-methyl)formamidopyrimidine.. It carries out the reaction 2'-deoxyribonucleotide-(2'-deoxyribose 5'-phosphate)-2'-deoxyribonucleotide-DNA = a 3'-end 2'-deoxyribonucleotide-(2,3-dehydro-2,3-deoxyribose 5'-phosphate)-DNA + a 5'-end 5'-phospho-2'-deoxyribonucleoside-DNA + H(+). Its function is as follows. Involved in base excision repair of DNA damaged by oxidation or by mutagenic agents. Acts as a DNA glycosylase that recognizes and removes damaged bases. Has a preference for oxidized purines, such as 7,8-dihydro-8-oxoguanine (8-oxoG). Has AP (apurinic/apyrimidinic) lyase activity and introduces nicks in the DNA strand. Cleaves the DNA backbone by beta-delta elimination to generate a single-strand break at the site of the removed base with both 3'- and 5'-phosphates. The polypeptide is Formamidopyrimidine-DNA glycosylase (Trichormus variabilis (strain ATCC 29413 / PCC 7937) (Anabaena variabilis)).